Reading from the N-terminus, the 553-residue chain is Dihydrolipoyllysine-residue acetyltransferase component of pyruvate dehydrogenase complex (553 aa).

Residues 2–77 (AFSVQMPALG…EVGGELAVIG (76 aa)) enclose the Lipoyl-binding 1 domain. The residue at position 43 (Lys43) is an N6-lipoyllysine. Positions 81–125 (DAGEAAAPAPEKVPAAQPESKPAPEPPPVQPTSGAPAGGDAKPVL) are disordered. Low complexity predominate over residues 84–100 (EAAAPAPEKVPAAQPES). A compositionally biased stretch (pro residues) spans 101-110 (KPAPEPPPVQ). Positions 121-196 (AKPVLMPELG…PVGGELARIG (76 aa)) constitute a Lipoyl-binding 2 domain. The residue at position 162 (Lys162) is an N6-lipoyllysine. Disordered regions lie at residues 204–238 (APAP…AGAA) and 278–321 (AAAE…TQKA). The span at 206 to 232 (APKPAPKPVPEPAPTPKAEPAPSPPAA) shows a compositional bias: pro residues. Residues 243–280 (YVTPLVRKLASENNIDLAGVTGTGVGGRIRKQDVLAAA) enclose the Peripheral subunit-binding (PSBD) domain. Residues 288-300 (APAPAAQAAAAPA) show a composition bias toward low complexity. Residues His523 and Asp527 contribute to the active site.

This sequence belongs to the 2-oxoacid dehydrogenase family. In terms of assembly, forms a 24-polypeptide structural core with octahedral symmetry. Part of the PDH complex, consisting of multiple copies of AceE (E1), DlaT (E2) and Lpd (E3). The cofactor is (R)-lipoate.

It catalyses the reaction N(6)-[(R)-dihydrolipoyl]-L-lysyl-[protein] + acetyl-CoA = N(6)-[(R)-S(8)-acetyldihydrolipoyl]-L-lysyl-[protein] + CoA. Component of the pyruvate dehydrogenase (PDH) complex, that catalyzes the overall conversion of pyruvate to acetyl-CoA and CO(2). This chain is Dihydrolipoyllysine-residue acetyltransferase component of pyruvate dehydrogenase complex (dlaT), found in Mycobacterium bovis (strain ATCC BAA-935 / AF2122/97).